The primary structure comprises 289 residues: Pyridoxal kinase PdxY (289 aa).

Substrate is bound by residues Ser-9 and 44 to 45 (TQ). Positions 112, 144, 149, and 182 each coordinate ATP. Position 221 (Asp-221) interacts with substrate.

This sequence belongs to the pyridoxine kinase family. PdxY subfamily. As to quaternary structure, homodimer. The cofactor is Mg(2+).

It catalyses the reaction pyridoxal + ATP = pyridoxal 5'-phosphate + ADP + H(+). The protein operates within cofactor metabolism; pyridoxal 5'-phosphate salvage; pyridoxal 5'-phosphate from pyridoxal: step 1/1. In terms of biological role, pyridoxal kinase involved in the salvage pathway of pyridoxal 5'-phosphate (PLP). Catalyzes the phosphorylation of pyridoxal to PLP. The protein is Pyridoxal kinase PdxY of Vibrio parahaemolyticus serotype O3:K6 (strain RIMD 2210633).